A 561-amino-acid chain; its full sequence is Arginine--tRNA ligase (561 aa).

The 'HIGH' region signature appears at 129-139 (ANPTGPLHIGH).

Belongs to the class-I aminoacyl-tRNA synthetase family. In terms of assembly, monomer.

The protein localises to the cytoplasm. The catalysed reaction is tRNA(Arg) + L-arginine + ATP = L-arginyl-tRNA(Arg) + AMP + diphosphate. This Geotalea uraniireducens (strain Rf4) (Geobacter uraniireducens) protein is Arginine--tRNA ligase.